The following is a 348-amino-acid chain: UDP-rhamnose/UDP-galactose transporter 2 (348 aa).

Helical transmembrane passes span 12–32, 44–64, 81–101, 104–124, 133–153, 160–180, 196–216, 230–250, 257–277, and 286–306; these read AVSD…IIMA, FSFA…VGMV, LLWF…SLML, VGFY…MEWV, EVKA…VTDV, FICA…IGSL, APIQ…FLSG, LCIL…YLCI, SFQV…WLIF, and IAGM…VELE.

It belongs to the TPT transporter family. TPT (TC 2.A.7.9) subfamily.

It is found in the golgi apparatus membrane. Its function is as follows. Nucleotide-sugar transporter that transports UDP-rhamnose or UDP-galactose and UMP in a strict counter-exchange mode. This Arabidopsis thaliana (Mouse-ear cress) protein is UDP-rhamnose/UDP-galactose transporter 2.